The chain runs to 506 residues: Aldehyde dehydrogenase [NAD(P)+] 1 (506 aa).

The active-site Proton acceptor is the E268. The active-site Nucleophile is C302.

It belongs to the aldehyde dehydrogenase family.

The protein resides in the cytoplasm. The catalysed reaction is an aldehyde + NAD(+) + H2O = a carboxylate + NADH + 2 H(+). The enzyme catalyses 3-aminopropanal + NAD(+) + H2O = beta-alanine + NADH + 2 H(+). In terms of biological role, cytoplasmic aldehyde dehydrogenase involved in ethanol oxidation. Required for pantothenic acid production through the conversion of 3-aminopropanal to beta-alanine, an intermediate in pantothenic acid (vitamin B5) and coenzyme A (CoA) biosynthesis. This is Aldehyde dehydrogenase [NAD(P)+] 1 (ALD2) from Saccharomyces cerevisiae (strain ATCC 204508 / S288c) (Baker's yeast).